Reading from the N-terminus, the 466-residue chain is Vacuolar-processing enzyme delta-isozyme (466 aa).

Residues 1–24 form the signal peptide; the sequence is MSSPLGHFQILVFLHALLIFSAES. Residue Asn-137 is glycosylated (N-linked (GlcNAc...) asparagine). His-164 is a catalytic residue. The active-site Nucleophile is the Cys-206. Cysteines 239 and 253 form a disulfide. N-linked (GlcNAc...) asparagine glycosylation occurs at Asn-322. 2 disulfides stabilise this stretch: Cys-417/Cys-447 and Cys-429/Cys-464.

This sequence belongs to the peptidase C13 family. Auto-catalytic activation. In terms of tissue distribution, seed specific. Restricted to developing seeds at 7 days after anthesis, and, at lower levels, detected in flowers. Detected in siliques, specifically in seed coats (at protein level).

It is found in the secreted. It localises to the extracellular space. Its subcellular location is the cell wall. The protein resides in the vacuole. It carries out the reaction Hydrolysis of proteins and small molecule substrates at -Asn-|-Xaa- bonds.. Its activity is regulated as follows. Strongly inhibited by biotin-YVAD-fmk (a caspase-1 inhibitor) and by Ac-DEVD-fmk. Asparagine-specific endopeptidase that may be involved in processing of proteins targeted to vacuoles. Probably involved in post-translational proteolysis of seed storage proteins in the protein storage vacuole of developing seeds. Exhibits a caspase-1-like activity in extracellular granules. At the early stage of seed development, required for the formation of the seed coat, by regulating cell death of specific cell layers in inner integument. The chain is Vacuolar-processing enzyme delta-isozyme from Arabidopsis thaliana (Mouse-ear cress).